Consider the following 420-residue polypeptide: Isocitrate dehydrogenase [NADP] (420 aa).

NADP(+) is bound by residues T75–T77 and R82. T77 lines the substrate pocket. Residues S94 to R100, R109, and R132 contribute to the substrate site. D252 is a Mn(2+) binding site. An NADP(+)-binding site is contributed by K260. Residue D275 participates in Mn(2+) binding. NADP(+) is bound by residues G310–H315 and N328.

It belongs to the isocitrate and isopropylmalate dehydrogenases family. The cofactor is Mg(2+). Mn(2+) is required as a cofactor.

The enzyme catalyses D-threo-isocitrate + NADP(+) = 2-oxoglutarate + CO2 + NADPH. Its function is as follows. May function in the production of NADPH for fatty acid and sterol synthesis. This Saccharomyces cerevisiae (strain ATCC 204508 / S288c) (Baker's yeast) protein is Isocitrate dehydrogenase [NADP] (IDP3).